The primary structure comprises 297 residues: F-actin-capping protein subunit beta (297 aa).

A compositionally biased stretch (basic and acidic residues) spans 276–289 (DLSGKESDDKRQSE). A disordered region spans residues 276-297 (DLSGKESDDKRQSELVKGLQSL).

Belongs to the F-actin-capping protein beta subunit family. In terms of assembly, component of the F-actin capping complex, composed of a heterodimer of an alpha and a beta subunit.

Its subcellular location is the cytoplasm. It is found in the cytoskeleton. The protein resides in the actin patch. F-actin-capping proteins bind in a Ca(2+)-independent manner to the fast growing ends of actin filaments (barbed end) thereby blocking the exchange of subunits at these ends. Unlike other capping proteins (such as gelsolin and severin), these proteins do not sever actin filaments. The chain is F-actin-capping protein subunit beta (CAP2) from Debaryomyces hansenii (strain ATCC 36239 / CBS 767 / BCRC 21394 / JCM 1990 / NBRC 0083 / IGC 2968) (Yeast).